The chain runs to 218 residues: Keratin-associated protein 10-8 (218 aa).

The 16 X 5 AA repeats of C-C-X(3) stretch occupies residues 26–202 (CGNQVSSPSA…FCQPSCCHPA (177 aa)). 16 consecutive repeat copies span residues 50–54 (CCEPT), 55–59 (CCAPS), 60–64 (CCAPA), 86–90 (CSSSS), 96–100 (CCVPV), 101–105 (CCRPV), 111–115 (CCRPV), 121–125 (CCTPV), 131–135 (CCRPV), 136–140 (CCRPV), 141–145 (CCRPV), 151–155 (CCRPM), 161–167 (PCSAPSS), 168–172 (CCRPS), 187–191 (CCVPT), and 198–202 (CCHPA).

It belongs to the KRTAP type 10 family. In terms of assembly, interacts with hair keratins.

Its function is as follows. In the hair cortex, hair keratin intermediate filaments are embedded in an interfilamentous matrix, consisting of hair keratin-associated proteins (KRTAP), which are essential for the formation of a rigid and resistant hair shaft through their extensive disulfide bond cross-linking with abundant cysteine residues of hair keratins. The matrix proteins include the high-sulfur and high-glycine-tyrosine keratins. The protein is Keratin-associated protein 10-8 of Bos taurus (Bovine).